Consider the following 172-residue polypeptide: Adenine phosphoribosyltransferase (172 aa).

This sequence belongs to the purine/pyrimidine phosphoribosyltransferase family. In terms of assembly, homodimer.

It is found in the cytoplasm. The enzyme catalyses AMP + diphosphate = 5-phospho-alpha-D-ribose 1-diphosphate + adenine. It participates in purine metabolism; AMP biosynthesis via salvage pathway; AMP from adenine: step 1/1. Functionally, catalyzes a salvage reaction resulting in the formation of AMP, that is energically less costly than de novo synthesis. The protein is Adenine phosphoribosyltransferase of Pediococcus pentosaceus (strain ATCC 25745 / CCUG 21536 / LMG 10740 / 183-1w).